Here is an 89-residue protein sequence, read N- to C-terminus: Small ribosomal subunit protein bS20 (89 aa).

Belongs to the bacterial ribosomal protein bS20 family.

In terms of biological role, binds directly to 16S ribosomal RNA. The chain is Small ribosomal subunit protein bS20 from Helicobacter acinonychis (strain Sheeba).